We begin with the raw amino-acid sequence, 1998 residues long: Receptor-type tyrosine-protein phosphatase beta (1998 aa).

An N-terminal signal peptide occupies residues 1–22 (MLRHGALTALWITLSVVQTGVA). 17 consecutive Fibronectin type-III domains span residues 23-109 (EQVK…VLQT), 113-206 (PPAR…VPSP), 207-291 (VKDL…TAPM), 292-384 (EVSN…VRNL), 378-466 (PEKV…QGRT), 470-556 (AVLQ…TVPA), 557-642 (QVTD…EGRT), 643-733 (VPSS…TVPD), 734-821 (KVQG…TIPE), 822-913 (PVKD…TVKN), 908-994 (PSTV…LGQT), 995-1088 (VPAS…VPAA), 1086-1173 (PAAV…GRTV), 1176-1263 (AVNH…TAPS), 1264-1357 (PPSL…TKPD), 1358-1449 (KIQN…IDRP), and 1449-1551 (PPQP…KLGA). Over 23–1622 (EQVKCNFTLL…ESEPLFGVIE (1600 aa)) the chain is Extracellular. Residues N28, N53, N75, N173, N199, and N268 are each glycosylated (N-linked (GlcNAc...) asparagine). Residues N415, N422, N480, N575, N599, and N653 are each glycosylated (N-linked (GlcNAc...) asparagine). The N-linked (GlcNAc...) asparagine glycan is linked to N830. N-linked (GlcNAc...) asparagine glycans are attached at residues N1041, N1097, N1164, N1186, N1213, N1275, N1368, N1471, N1475, and N1519. A helical transmembrane segment spans residues 1623–1643 (GVSAGLFLIGMLVALVAFFIC). Over 1644 to 1997 (RQKASHSRER…EYHRDAIYSR (354 aa)) the chain is Cytoplasmic. Residues 1704-1964 (LSKEYEDLKD…VYLHQCVRDV (261 aa)) form the Tyrosine-protein phosphatase domain. Substrate is bound by residues D1871, 1905–1911 (CSAGVGR), and Q1949. The Phosphocysteine intermediate role is filled by C1905. At Y1982 the chain carries Phosphotyrosine.

Belongs to the protein-tyrosine phosphatase family. Receptor class 3 subfamily. As to quaternary structure, monomer. Interacts with TEK. Interacts via fibronectin type-III 17 domain with CDH5. Detected in a complex with CNTN1 and NRCAM. Interacts (phosphorylated form) with FYN and GRB2. Interacts with IGFBP2. Expression is very high in the vasculature of lung, spleen, and kidney, as well as in the heart valves, and is also present in the endothelium of arterioles and venules. Also expressed in tumor vasculature.

It localises to the membrane. It catalyses the reaction O-phospho-L-tyrosyl-[protein] + H2O = L-tyrosyl-[protein] + phosphate. Plays an important role in blood vessel remodeling and angiogenesis. Not necessary for the initial formation of blood vessels, but is essential for their maintenance and remodeling. Can induce dephosphorylation of TEK/TIE2, CDH5/VE-cadherin and KDR/VEGFR-2. Regulates angiopoietin-TIE2 signaling in endothelial cells. Acts as a negative regulator of TIE2, and controls TIE2 driven endothelial cell proliferation, which in turn affects blood vessel remodeling during embryonic development and determines blood vessel size during perinatal growth. Essential for the maintenance of endothelial cell contact integrity and for the adhesive function of VE-cadherin in endothelial cells and this requires the presence of plakoglobin. The protein is Receptor-type tyrosine-protein phosphatase beta (Ptprb) of Mus musculus (Mouse).